We begin with the raw amino-acid sequence, 256 residues long: MNDQRKGEHAEPTTHFGYQDVPESQKAKKVAEVFHSVAAKYDLMNDVLSGGMHRLWKRFTIELSGVRSGNRVLDIAGGTGDLAAKFSRLVGPTGQVVLADINDSMLKVGRDRLLDRGVAGNIEFVQADAEKLPFPDNHFDCVTIAFGLRNVTHKDEAIRSMLRVLKPGGRLLILEFSKPTNKLMSKAYDAYSFAFMPLAGKLITNDSESYRYLAESIRMHPDQETLKAMMVDAGFDRVTYHNMTSGIVAVHRGIKP.

The span at 1 to 12 (MNDQRKGEHAEP) shows a compositional bias: basic and acidic residues. Positions 1–21 (MNDQRKGEHAEPTTHFGYQDV) are disordered. S-adenosyl-L-methionine contacts are provided by residues threonine 79, aspartate 100, and 128–129 (DA).

The protein belongs to the class I-like SAM-binding methyltransferase superfamily. MenG/UbiE family.

It carries out the reaction a 2-demethylmenaquinol + S-adenosyl-L-methionine = a menaquinol + S-adenosyl-L-homocysteine + H(+). The enzyme catalyses a 2-methoxy-6-(all-trans-polyprenyl)benzene-1,4-diol + S-adenosyl-L-methionine = a 5-methoxy-2-methyl-3-(all-trans-polyprenyl)benzene-1,4-diol + S-adenosyl-L-homocysteine + H(+). Its pathway is quinol/quinone metabolism; menaquinone biosynthesis; menaquinol from 1,4-dihydroxy-2-naphthoate: step 2/2. The protein operates within cofactor biosynthesis; ubiquinone biosynthesis. In terms of biological role, methyltransferase required for the conversion of demethylmenaquinol (DMKH2) to menaquinol (MKH2) and the conversion of 2-polyprenyl-6-methoxy-1,4-benzoquinol (DDMQH2) to 2-polyprenyl-3-methyl-6-methoxy-1,4-benzoquinol (DMQH2). The sequence is that of Ubiquinone/menaquinone biosynthesis C-methyltransferase UbiE from Pseudomonas putida (strain W619).